The primary structure comprises 379 residues: UDP-4-amino-4-deoxy-L-arabinose--oxoglutarate aminotransferase (379 aa).

Lys182 carries the post-translational modification N6-(pyridoxal phosphate)lysine.

It belongs to the DegT/DnrJ/EryC1 family. ArnB subfamily. As to quaternary structure, homodimer. Requires pyridoxal 5'-phosphate as cofactor.

The enzyme catalyses UDP-4-amino-4-deoxy-beta-L-arabinose + 2-oxoglutarate = UDP-beta-L-threo-pentopyranos-4-ulose + L-glutamate. Its pathway is nucleotide-sugar biosynthesis; UDP-4-deoxy-4-formamido-beta-L-arabinose biosynthesis; UDP-4-deoxy-4-formamido-beta-L-arabinose from UDP-alpha-D-glucuronate: step 2/3. It participates in bacterial outer membrane biogenesis; lipopolysaccharide biosynthesis. Its function is as follows. Catalyzes the conversion of UDP-4-keto-arabinose (UDP-Ara4O) to UDP-4-amino-4-deoxy-L-arabinose (UDP-L-Ara4N). The modified arabinose is attached to lipid A and is required for resistance to polymyxin and cationic antimicrobial peptides. The polypeptide is UDP-4-amino-4-deoxy-L-arabinose--oxoglutarate aminotransferase (Klebsiella pneumoniae (strain 342)).